Here is a 200-residue protein sequence, read N- to C-terminus: NADH-quinone oxidoreductase subunit C (200 aa).

The protein belongs to the complex I 30 kDa subunit family. As to quaternary structure, NDH-1 is composed of 14 different subunits. Subunits NuoB, C, D, E, F, and G constitute the peripheral sector of the complex.

The protein localises to the cell inner membrane. It catalyses the reaction a quinone + NADH + 5 H(+)(in) = a quinol + NAD(+) + 4 H(+)(out). NDH-1 shuttles electrons from NADH, via FMN and iron-sulfur (Fe-S) centers, to quinones in the respiratory chain. The immediate electron acceptor for the enzyme in this species is believed to be ubiquinone. Couples the redox reaction to proton translocation (for every two electrons transferred, four hydrogen ions are translocated across the cytoplasmic membrane), and thus conserves the redox energy in a proton gradient. This chain is NADH-quinone oxidoreductase subunit C, found in Burkholderia thailandensis (strain ATCC 700388 / DSM 13276 / CCUG 48851 / CIP 106301 / E264).